The primary structure comprises 132 residues: Acetylcholinesterase (132 aa).

N-linked (GlcNAc...) asparagine glycosylation is present at Asn37. Cys45 and Cys72 are joined by a disulfide.

It belongs to the type-B carboxylesterase/lipase family.

The protein resides in the synapse. It is found in the secreted. Its subcellular location is the cell membrane. The catalysed reaction is acetylcholine + H2O = choline + acetate + H(+). Functionally, rapidly hydrolyzes choline released into the synapse. This Culex pipiens pipiens (Northern house mosquito) protein is Acetylcholinesterase (ACE-1).